The primary structure comprises 285 residues: N-alpha-acetyltransferase 40 (285 aa).

The 187-residue stretch at 88-274 (INYKLHKSRG…GGGRVVVPCD (187 aa)) folds into the N-acetyltransferase domain. Residues Y116, 163–165 (TEE), and Y185 each bind substrate. Residues 187-189 (VHV) and 195-200 (GHGIGR) contribute to the acetyl-CoA site. T228 is a substrate binding site. N233 is a binding site for acetyl-CoA.

Belongs to the acetyltransferase family. NAA40 subfamily.

The protein localises to the nucleus. Its subcellular location is the cytoplasm. It catalyses the reaction N-terminal L-seryl-[histone H4] + acetyl-CoA = N-terminal N(alpha)-acetyl-L-seryl-[histone H4] + CoA + H(+). The catalysed reaction is N-terminal L-seryl-[histone H2A] + acetyl-CoA = N-terminal N(alpha)-acetyl-L-seryl-[histone H2A] + CoA + H(+). In terms of biological role, N-alpha-acetyltransferase that specifically mediates the acetylation of the N-terminal residues of histones H4 and H2A. In Saccharomyces cerevisiae (strain ATCC 204508 / S288c) (Baker's yeast), this protein is N-alpha-acetyltransferase 40.